Here is a 128-residue protein sequence, read N- to C-terminus: Small ribosomal subunit protein uS11 (128 aa).

This sequence belongs to the universal ribosomal protein uS11 family. Part of the 30S ribosomal subunit. Interacts with proteins S7 and S18. Binds to IF-3.

In terms of biological role, located on the platform of the 30S subunit, it bridges several disparate RNA helices of the 16S rRNA. Forms part of the Shine-Dalgarno cleft in the 70S ribosome. The sequence is that of Small ribosomal subunit protein uS11 from Solidesulfovibrio magneticus (strain ATCC 700980 / DSM 13731 / RS-1) (Desulfovibrio magneticus).